Reading from the N-terminus, the 519-residue chain is Galactose-1-phosphate uridylyltransferase (519 aa).

Belongs to the galactose-1-phosphate uridylyltransferase type 2 family.

It localises to the cytoplasm. It carries out the reaction alpha-D-galactose 1-phosphate + UDP-alpha-D-glucose = alpha-D-glucose 1-phosphate + UDP-alpha-D-galactose. It functions in the pathway carbohydrate metabolism; galactose metabolism. The protein is Galactose-1-phosphate uridylyltransferase of Caldanaerobacter subterraneus subsp. tengcongensis (strain DSM 15242 / JCM 11007 / NBRC 100824 / MB4) (Thermoanaerobacter tengcongensis).